We begin with the raw amino-acid sequence, 38 residues long: Photosystem II reaction center protein L (38 aa).

A helical transmembrane segment spans residues 17 to 37 (SLYWGLLLIFVLAVLFSNYFF).

This sequence belongs to the PsbL family. PSII is composed of 1 copy each of membrane proteins PsbA, PsbB, PsbC, PsbD, PsbE, PsbF, PsbH, PsbI, PsbJ, PsbK, PsbL, PsbM, PsbT, PsbX, PsbY, PsbZ, Psb30/Ycf12, at least 3 peripheral proteins of the oxygen-evolving complex and a large number of cofactors. It forms dimeric complexes.

The protein localises to the plastid. Its subcellular location is the chloroplast thylakoid membrane. In terms of biological role, one of the components of the core complex of photosystem II (PSII). PSII is a light-driven water:plastoquinone oxidoreductase that uses light energy to abstract electrons from H(2)O, generating O(2) and a proton gradient subsequently used for ATP formation. It consists of a core antenna complex that captures photons, and an electron transfer chain that converts photonic excitation into a charge separation. This subunit is found at the monomer-monomer interface and is required for correct PSII assembly and/or dimerization. In Ananas comosus (Pineapple), this protein is Photosystem II reaction center protein L.